Reading from the N-terminus, the 298-residue chain is Proline iminopeptidase (298 aa).

The AB hydrolase-1 domain maps to 26–277; sequence VLLLHGGPAM…NGSHLAMWDD (252 aa). Serine 103 (nucleophile) is an active-site residue. Aspartate 244 is a catalytic residue. Histidine 271 (proton donor) is an active-site residue.

It belongs to the peptidase S33 family. In terms of assembly, monomer.

The catalysed reaction is Release of N-terminal proline from a peptide.. Its function is as follows. Releases the N-terminal proline from various substrates. Cleaves specifically Pro-betaNA and small peptides containing proline at the amino terminal. No activity against hydroxyproline-betaNA. In Elizabethkingia meningoseptica (Chryseobacterium meningosepticum), this protein is Proline iminopeptidase (fpaP).